We begin with the raw amino-acid sequence, 387 residues long: 3-hydroxy-D-aspartate aldolase (387 aa).

Lysine 62 carries the post-translational modification N6-(pyridoxal phosphate)lysine. A pyridoxal 5'-phosphate-binding site is contributed by glutamine 85. A disordered region spans residues histidine 199–leucine 228. Pyridoxal 5'-phosphate-binding positions include threonine 238, glycine 256–serine 257, and tyrosine 265. Positions 355 and 357 each coordinate Mg(2+).

Belongs to the DSD1 family. In terms of assembly, homodimer. Pyridoxal 5'-phosphate serves as cofactor. Mn(2+) is required as a cofactor. The cofactor is Mg(2+). It depends on Co(2+) as a cofactor.

The enzyme catalyses (3S)-3-hydroxy-D-aspartate = glyoxylate + glycine. The catalysed reaction is (3R)-3-hydroxy-D-aspartate = glyoxylate + glycine. Catalyzes the condensation of glyoxylate and glycine into (2R,3S)-beta-hydroxyaspartate ((3S)-3-hydroxy-D-aspartate). Functions in glyoxylate assimilation via the beta-hydroxyaspartate cycle (BHAC). In vitro catalyzes the cleavage of both D-erythro- and D-threo-3-hydroxyaspartate to glycine and glyoxylate. Also acts on D-threonine, D-3-phenylserine and D-3-3,4-methylenedioxyphenylserine. This Paracoccus denitrificans protein is 3-hydroxy-D-aspartate aldolase (dhaa).